The chain runs to 321 residues: MESNGVPMITLSSGIRMPALGMGTVETMEKGTEREKLAFLKAIEVGYRHFDTAAAYQTEECLGEAIAEALQLGLIKSRDELFITSKLWCADAHADLVLPALQNSLRNLKLDYLDLYLIHHPVSLKPGKFVNEIPKDHILPMDYKSVWAAMEECQTLGFTRAIGVCNFSCKKLQELMATANSPPVVNQVEMSPTLHQKNLREYCKANNIMITAHSVLGAVGAAWGTKAVMHSKVLHQIAVARGKSVAQVSMRWVYQQGASLVVKSFNEARMKENLKIFDWELTAEDMEKISEIPQSRTSSAAFLLSPTGPFKTEEEFWDEKD.

NADPH is bound by residues threonine 27 and aspartate 51. Residues tyrosine 56 and histidine 119 each act as proton donor in the active site. Residue histidine 119 participates in substrate binding. Glutamine 187, serine 214, leucine 216, serine 264, and arginine 269 together coordinate NADPH.

It belongs to the aldo/keto reductase family. In terms of tissue distribution, latex secreting cells (laticifer cells). Expressed constitutively and ubiquitously with highest levels in capsules.

The protein resides in the cytoplasm. Its subcellular location is the cytosol. The catalysed reaction is codeine + NADP(+) = codeinone + NADPH + H(+). It catalyses the reaction neopine + NADP(+) = neopinone + NADPH + H(+). It carries out the reaction morphine + NADP(+) = morphinone + NADPH + H(+). The enzyme catalyses neomorphine + NADP(+) = neomorphinone + NADPH + H(+). It functions in the pathway alkaloid biosynthesis; morphine biosynthesis. Its function is as follows. NADPH-dependent codeinone reductase involved in biosynthesis of morphinan-type benzylisoquinoline and opiate alkaloids natural products. Reduces codeinone to codeine in the penultimate step in morphine biosynthesis. Can use morphinone, hydrocodone and hydromorphone as substrate during reductive reaction with NADPH as cofactor, and morphine and dihydrocodeine as substrate during oxidative reaction with NADP as cofactor. Converts morphinone to morphine, and neomorphinone to neomorphine. Reduces irreversibly neopinone, a spontaneous isomer of codeinone, to neopine; in planta, neopine levels are limited to low levels. In Papaver somniferum (Opium poppy), this protein is NADPH-dependent codeinone reductase 1-5.